The following is a 93-amino-acid chain: Small ribosomal subunit protein uS19 (93 aa).

The protein belongs to the universal ribosomal protein uS19 family.

Protein S19 forms a complex with S13 that binds strongly to the 16S ribosomal RNA. This chain is Small ribosomal subunit protein uS19, found in Caldanaerobacter subterraneus subsp. tengcongensis (strain DSM 15242 / JCM 11007 / NBRC 100824 / MB4) (Thermoanaerobacter tengcongensis).